A 1241-amino-acid chain; its full sequence is ATP-dependent helicase/nuclease subunit A (1241 aa).

The 474-residue stretch at 12-485 (SQWTDDQWKA…IDLAKNFRSR (474 aa)) folds into the UvrD-like helicase ATP-binding domain. 33-40 (AAAGSGKT) contributes to the ATP binding site. One can recognise a UvrD-like helicase C-terminal domain in the interval 505–805 (GEIDYDADAE…RIMTIHKSKG (301 aa)).

This sequence belongs to the helicase family. AddA subfamily. As to quaternary structure, heterodimer of AddA and AddB/RexB. It depends on Mg(2+) as a cofactor.

It catalyses the reaction Couples ATP hydrolysis with the unwinding of duplex DNA by translocating in the 3'-5' direction.. The enzyme catalyses ATP + H2O = ADP + phosphate + H(+). Functionally, the heterodimer acts as both an ATP-dependent DNA helicase and an ATP-dependent, dual-direction single-stranded exonuclease. Recognizes the chi site generating a DNA molecule suitable for the initiation of homologous recombination. The AddA nuclease domain is required for chi fragment generation; this subunit has the helicase and 3' -&gt; 5' nuclease activities. This is ATP-dependent helicase/nuclease subunit A from Bacillus cereus (strain G9842).